Reading from the N-terminus, the 306-residue chain is tRNA pseudouridine synthase B (306 aa).

Asp-38 (nucleophile) is an active-site residue.

It belongs to the pseudouridine synthase TruB family. Type 1 subfamily.

The catalysed reaction is uridine(55) in tRNA = pseudouridine(55) in tRNA. In terms of biological role, responsible for synthesis of pseudouridine from uracil-55 in the psi GC loop of transfer RNAs. The protein is tRNA pseudouridine synthase B of Syntrophotalea carbinolica (strain DSM 2380 / NBRC 103641 / GraBd1) (Pelobacter carbinolicus).